The sequence spans 66 residues: Large ribosomal subunit protein uL29 (66 aa).

The protein belongs to the universal ribosomal protein uL29 family.

In Thermococcus onnurineus (strain NA1), this protein is Large ribosomal subunit protein uL29.